A 402-amino-acid polypeptide reads, in one-letter code: Sorting nexin 1 (402 aa).

Residues 1-10 (MESTEQPRNI) are compositionally biased toward polar residues. The segment at 1 to 25 (MESTEQPRNISGSMQSPRSPSSHPY) is disordered. Residues 11 to 24 (SGSMQSPRSPSSHP) are compositionally biased toward low complexity. At serine 16 the chain carries Phosphoserine. The 120-residue stretch at 24-143 (PYLSVSVTDP…TFLQADEETM (120 aa)) folds into the PX domain. A 1,2-diacyl-sn-glycero-3-phospho-(1D-myo-inositol-3-phosphate) contacts are provided by arginine 67, lysine 93, and arginine 109. A BAR domain is found at 160 to 402 (LMQMFRDVQS…LPKLEASYSV (243 aa)).

It belongs to the sorting nexin family. In terms of assembly, homodimer. Heterodimer with SNX2A or SNX2B. Component of the retromer complex which consists of VPS29 (MAG1), VPS26 (VPS26A or VPS26B), VPS35 (VPS35A or VPS35B or VPS35C), VPS5/17 (SNX1 or SNX2A or SNX2B). Interacts with BLOS1 and BLOS2. Ubiquitously expressed.

The protein localises to the cytoplasm. The protein resides in the endosome membrane. Its subcellular location is the prevacuolar compartment membrane. It localises to the golgi apparatus. It is found in the trans-Golgi network membrane. In terms of biological role, plays a role in vesicular protein sorting. Acts at the crossroads between the secretory and endocytic pathways. Is involved in the endosome to vacuole protein transport via its interaction with the BLOS1/2 proteins and, as component of the membrane-associated retromer complex, is also involved in endosome-to-Golgi retrograde transport. Required for the auxin-carrier protein PIN2 sorting to the lytic vacuolar pathway and the trafficking of several plasma membrane proteins. Also involved in the efficient sorting of seed storage protein globulin 12S. The sequence is that of Sorting nexin 1 (SNX1) from Arabidopsis thaliana (Mouse-ear cress).